The primary structure comprises 59 residues: Small ribosomal subunit protein eS30 (59 aa).

The interval 1–35 (KVHGSLARAGKVRGQTPKVAKQEKKKKKTGRAKRR) is disordered. The span at 23–35 (EKKKKKTGRAKRR) shows a compositional bias: basic residues. N6-succinyllysine is present on lysine 51.

The protein belongs to the eukaryotic ribosomal protein eS30 family.

The polypeptide is Small ribosomal subunit protein eS30 (Fau) (Mus spicilegus (Steppe mouse)).